The sequence spans 150 residues: Meiotically up-regulated gene 108 protein (150 aa).

Positions 1–11 (MANRFTSSDQT) are enriched in polar residues. A disordered region spans residues 1 to 150 (MANRFTSSDQ…RDISLLGSTI (150 aa)). Basic and acidic residues predominate over residues 12 to 23 (QETHGHHVDKHS). The segment covering 83-93 (NRSSQHTGRVN) has biased composition (polar residues).

The protein localises to the cytoplasm. It localises to the nucleus. In terms of biological role, has a role in meiosis. This chain is Meiotically up-regulated gene 108 protein (mug108), found in Schizosaccharomyces pombe (strain 972 / ATCC 24843) (Fission yeast).